The following is a 366-amino-acid chain: tRNA/tmRNA (uracil-C(5))-methyltransferase (366 aa).

S-adenosyl-L-methionine-binding residues include Gln-190, Tyr-218, Asn-223, Glu-239, and Asp-299. Residue Cys-324 is the Nucleophile of the active site. Catalysis depends on Glu-358, which acts as the Proton acceptor.

It belongs to the class I-like SAM-binding methyltransferase superfamily. RNA M5U methyltransferase family. TrmA subfamily.

The enzyme catalyses uridine(54) in tRNA + S-adenosyl-L-methionine = 5-methyluridine(54) in tRNA + S-adenosyl-L-homocysteine + H(+). It carries out the reaction uridine(341) in tmRNA + S-adenosyl-L-methionine = 5-methyluridine(341) in tmRNA + S-adenosyl-L-homocysteine + H(+). Functionally, dual-specificity methyltransferase that catalyzes the formation of 5-methyluridine at position 54 (m5U54) in all tRNAs, and that of position 341 (m5U341) in tmRNA (transfer-mRNA). The polypeptide is tRNA/tmRNA (uracil-C(5))-methyltransferase (Salmonella typhi).